The chain runs to 300 residues: tRNA pseudouridine synthase B (300 aa).

The active-site Nucleophile is Asp41.

It belongs to the pseudouridine synthase TruB family. Type 1 subfamily.

The catalysed reaction is uridine(55) in tRNA = pseudouridine(55) in tRNA. Functionally, responsible for synthesis of pseudouridine from uracil-55 in the psi GC loop of transfer RNAs. In Synechococcus sp. (strain WH7803), this protein is tRNA pseudouridine synthase B.